The chain runs to 109 residues: MNLTPKERERLTIFMAAELARRRKERGVKLNHPETVAYISDWACERAREGMSVAEIRQEATALLTREDVMDGVPELVDMVQVEPMFPDGTKLVTIHDPIRADTREQLEE.

Belongs to the urease gamma subunit family. In terms of assembly, heterotrimer of UreA (gamma), UreB (beta) and UreC (alpha) subunits. Three heterotrimers associate to form the active enzyme.

Its subcellular location is the cytoplasm. It carries out the reaction urea + 2 H2O + H(+) = hydrogencarbonate + 2 NH4(+). It participates in nitrogen metabolism; urea degradation; CO(2) and NH(3) from urea (urease route): step 1/1. This Natronomonas pharaonis (strain ATCC 35678 / DSM 2160 / CIP 103997 / JCM 8858 / NBRC 14720 / NCIMB 2260 / Gabara) (Halobacterium pharaonis) protein is Urease subunit gamma.